A 517-amino-acid chain; its full sequence is Endoglucanase A (517 aa).

A signal peptide spans Met1 to Ser25. Glu185 acts as the Proton donor in catalysis. Residue Glu309 is the Nucleophile of the active site. A compositionally biased stretch (basic and acidic residues) spans His382–Ser392. Residues His382–Lys424 are disordered. Over residues Thr393–Ser407 the composition is skewed to polar residues. A compositionally biased stretch (low complexity) spans Gly408 to Thr420. Residues Thr416–Asp517 enclose the CBM2 domain.

Belongs to the glycosyl hydrolase 5 (cellulase A) family.

The enzyme catalyses Endohydrolysis of (1-&gt;4)-beta-D-glucosidic linkages in cellulose, lichenin and cereal beta-D-glucans.. Its function is as follows. Hydrolyzes barley beta-glucan, lichenan, carboxymethylcellulose and xylan. It shows preferential activity against the larger cellooligosaccharides (cellohexaose and cellopentaose); cellotetraose is the smallest substrate degraded completely. The polypeptide is Endoglucanase A (celA) (Clostridium longisporum).